We begin with the raw amino-acid sequence, 262 residues long: Encapsulin nanocompartment protein Rv1762c (262 aa).

The protein belongs to the UPF0145 family.

It localises to the encapsulin nanocompartment. Its function is as follows. Cargo protein of a type 1 encapsulin nanocompartment possibly involved in protection against oxidative stress. The sequence is that of Encapsulin nanocompartment protein Rv1762c from Mycobacterium tuberculosis (strain ATCC 25618 / H37Rv).